Reading from the N-terminus, the 1036-residue chain is Ubiquitin carboxyl-terminal hydrolase 48 (1036 aa).

The 333-residue stretch at 89–421 (VGLTNLGASC…NAYMLVYRLQ (333 aa)) folds into the USP domain. Cys-98 acts as the Nucleophile in catalysis. Catalysis depends on His-353, which acts as the Proton acceptor. DUSP domains follow at residues 460–554 (QSVD…KALC), 569–692 (NQLN…YKEC), and 712–825 (MIAK…RIEV). Positions 611-644 (DEQDGEAEQSNGKINGSPFSKDESKEEKKEEEEE) are disordered. The span at 618 to 628 (EQSNGKINGSP) shows a compositional bias: polar residues. The disordered stretch occupies residues 881-924 (APELNVSSSETEEDKEEAKPDGEKDPDFNQSNGGTKRQKTSQQG). Phosphoserine is present on residues Ser-887, Ser-888, and Ser-889. A compositionally biased stretch (basic and acidic residues) spans 896–907 (EEAKPDGEKDPD). A compositionally biased stretch (polar residues) spans 908–924 (FNQSNGGTKRQKTSQQG). A Ubiquitin-like domain is found at 930–1010 (KQVIRRSTRH…ILLKADEPIA (81 aa)). At Lys-957 the chain carries N6-acetyllysine.

The protein belongs to the peptidase C19 family. As to quaternary structure, interacts with TRAF2 and RELA. Interacts with GPS1. In terms of tissue distribution, present in the brain, in particular in the postsynaptic density and the dendritic lipid raft fractions (at protein level).

The protein resides in the cytoplasm. Its subcellular location is the nucleus. It is found in the cell projection. The protein localises to the cilium. The catalysed reaction is Thiol-dependent hydrolysis of ester, thioester, amide, peptide and isopeptide bonds formed by the C-terminal Gly of ubiquitin (a 76-residue protein attached to proteins as an intracellular targeting signal).. Functionally, deubiquitinase that recognizes and hydrolyzes the peptide bond at the C-terminal Gly of ubiquitin. Involved in the processing of polyubiquitin precursors as well as that of ubiquitinated proteins. Plays a role in the regulation of NF-kappa-B activation by TNF receptor superfamily via its interactions with RELA and TRAF2. May also play a regulatory role at postsynaptic sites. Plays an important role in cell cycle progression by deubiquitinating Aurora B/AURKB and thereby extending its stability. In the context of H. pylori infection, stabilizes nuclear RELA through deubiquitination, thereby promoting the transcriptional activity of RELA to prolong TNFAIP3 de novo synthesis. Consequently, TNFAIP3 suppresses caspase activity and apoptotic cell death. Also functions in the modulation of the ciliary and synaptic transport as well as cytoskeleton organization, which are key for photoreceptor function and homeostasis. To achieve this, stabilizes the levels of the retinal degeneration-associated proteins ARL3 and UNC119 using distinct mechanisms. Plays a positive role in pyroptosis by stabilizing gasdermin E/GSDME through removal of its 'Lys-48'-linked ubiquitination. This chain is Ubiquitin carboxyl-terminal hydrolase 48 (Usp48), found in Rattus norvegicus (Rat).